A 231-amino-acid polypeptide reads, in one-letter code: Large ribosomal subunit protein uL1 (231 aa).

This sequence belongs to the universal ribosomal protein uL1 family. As to quaternary structure, part of the 50S ribosomal subunit.

Its function is as follows. Binds directly to 23S rRNA. The L1 stalk is quite mobile in the ribosome, and is involved in E site tRNA release. Functionally, protein L1 is also a translational repressor protein, it controls the translation of the L11 operon by binding to its mRNA. In Pseudomonas putida (strain ATCC 700007 / DSM 6899 / JCM 31910 / BCRC 17059 / LMG 24140 / F1), this protein is Large ribosomal subunit protein uL1.